The following is a 135-amino-acid chain: Small ribosomal subunit protein uS11 (135 aa).

The tract at residues 1–20 is disordered; the sequence is MGRQRQQRSRGSRSRRRVRK.

The protein belongs to the universal ribosomal protein uS11 family. Part of the 30S ribosomal subunit. Interacts with proteins S7 and S18. Binds to IF-3.

Its function is as follows. Located on the platform of the 30S subunit, it bridges several disparate RNA helices of the 16S rRNA. Forms part of the Shine-Dalgarno cleft in the 70S ribosome. The protein is Small ribosomal subunit protein uS11 of Rubrobacter xylanophilus (strain DSM 9941 / JCM 11954 / NBRC 16129 / PRD-1).